A 415-amino-acid chain; its full sequence is Secernin-2 (415 aa).

Residue C8 is part of the active site.

Belongs to the peptidase C69 family. Secernin subfamily.

The sequence is that of Secernin-2 (scrn2) from Danio rerio (Zebrafish).